Reading from the N-terminus, the 296-residue chain is 4-hydroxybenzoate octaprenyltransferase (296 aa).

The next 8 helical transmembrane spans lie at proline 28–glycine 48, leucine 52–isoleucine 72, alanine 102–serine 122, threonine 145–alanine 167, serine 174–valine 196, methionine 219–phenylalanine 239, leucine 241–tryptophan 261, and phenylalanine 275–leucine 295.

This sequence belongs to the UbiA prenyltransferase family. The cofactor is Mg(2+).

The protein resides in the cell inner membrane. It carries out the reaction all-trans-octaprenyl diphosphate + 4-hydroxybenzoate = 4-hydroxy-3-(all-trans-octaprenyl)benzoate + diphosphate. Its pathway is cofactor biosynthesis; ubiquinone biosynthesis. Catalyzes the prenylation of para-hydroxybenzoate (PHB) with an all-trans polyprenyl group. Mediates the second step in the final reaction sequence of ubiquinone-8 (UQ-8) biosynthesis, which is the condensation of the polyisoprenoid side chain with PHB, generating the first membrane-bound Q intermediate 3-octaprenyl-4-hydroxybenzoate. The protein is 4-hydroxybenzoate octaprenyltransferase of Pseudomonas putida (strain W619).